The chain runs to 487 residues: Bifunctional protein GlmU (487 aa).

Residues M1–R232 are pyrophosphorylase. UDP-N-acetyl-alpha-D-glucosamine contacts are provided by residues L6–G9, K20, Q77, and G82–T83. D107 contacts Mg(2+). UDP-N-acetyl-alpha-D-glucosamine contacts are provided by G142, E157, N172, and N230. N230 provides a ligand contact to Mg(2+). Residues V233 to G253 are linker. An N-acetyltransferase region spans residues G254 to E487. Residues R335 and K353 each contribute to the UDP-N-acetyl-alpha-D-glucosamine site. Catalysis depends on H365, which acts as the Proton acceptor. UDP-N-acetyl-alpha-D-glucosamine contacts are provided by Y368 and N379. Acetyl-CoA-binding positions include A382, N388–Y389, S407, and A425. A disordered region spans residues A453–E487. Over residues S477–E487 the composition is skewed to polar residues.

In the N-terminal section; belongs to the N-acetylglucosamine-1-phosphate uridyltransferase family. The protein in the C-terminal section; belongs to the transferase hexapeptide repeat family. As to quaternary structure, homotrimer. It depends on Mg(2+) as a cofactor.

Its subcellular location is the cytoplasm. The enzyme catalyses alpha-D-glucosamine 1-phosphate + acetyl-CoA = N-acetyl-alpha-D-glucosamine 1-phosphate + CoA + H(+). It catalyses the reaction N-acetyl-alpha-D-glucosamine 1-phosphate + UTP + H(+) = UDP-N-acetyl-alpha-D-glucosamine + diphosphate. It participates in nucleotide-sugar biosynthesis; UDP-N-acetyl-alpha-D-glucosamine biosynthesis; N-acetyl-alpha-D-glucosamine 1-phosphate from alpha-D-glucosamine 6-phosphate (route II): step 2/2. It functions in the pathway nucleotide-sugar biosynthesis; UDP-N-acetyl-alpha-D-glucosamine biosynthesis; UDP-N-acetyl-alpha-D-glucosamine from N-acetyl-alpha-D-glucosamine 1-phosphate: step 1/1. Its pathway is bacterial outer membrane biogenesis; LPS lipid A biosynthesis. Functionally, catalyzes the last two sequential reactions in the de novo biosynthetic pathway for UDP-N-acetylglucosamine (UDP-GlcNAc). The C-terminal domain catalyzes the transfer of acetyl group from acetyl coenzyme A to glucosamine-1-phosphate (GlcN-1-P) to produce N-acetylglucosamine-1-phosphate (GlcNAc-1-P), which is converted into UDP-GlcNAc by the transfer of uridine 5-monophosphate (from uridine 5-triphosphate), a reaction catalyzed by the N-terminal domain. This Corynebacterium jeikeium (strain K411) protein is Bifunctional protein GlmU.